A 379-amino-acid chain; its full sequence is Lipid-A-disaccharide synthase (379 aa).

This sequence belongs to the LpxB family.

It carries out the reaction a lipid X + a UDP-2-N,3-O-bis[(3R)-3-hydroxyacyl]-alpha-D-glucosamine = a lipid A disaccharide + UDP + H(+). It functions in the pathway bacterial outer membrane biogenesis; LPS lipid A biosynthesis. Functionally, condensation of UDP-2,3-diacylglucosamine and 2,3-diacylglucosamine-1-phosphate to form lipid A disaccharide, a precursor of lipid A, a phosphorylated glycolipid that anchors the lipopolysaccharide to the outer membrane of the cell. In Pseudomonas fluorescens (strain SBW25), this protein is Lipid-A-disaccharide synthase.